We begin with the raw amino-acid sequence, 1328 residues long: WASH complex subunit 2 (1328 aa).

Residues Met-1–Asp-219 are sufficient for interaction with WASHC3, WASHC4 and WASHC5; required for interaction with WASHC1. Phosphoserine is present on residues Ser-157, Ser-159, Ser-204, Ser-205, and Ser-209. Low complexity predominate over residues Gly-201–Asp-213. Disordered stretches follow at residues Gly-201–Leu-655 and Lys-675–Thr-830. 2 stretches are compositionally biased toward acidic residues: residues Asp-219 to Asp-231 and Ser-248 to Glu-273. Ser-283 bears the Phosphoserine mark. A compositionally biased stretch (basic and acidic residues) spans Leu-288 to Ala-323. Residue Thr-321 is modified to Phosphothreonine. The sufficient for interaction with CCDC93 stretch occupies residues Ser-346–Gln-592. The interaction with VPS35 stretch occupies residues Arg-347 to Gln-1328. The LFa 1 signature appears at Leu-357 to Phe-367. Phosphoserine occurs at positions 384 and 387. 2 short sequence motifs (LFa) span residues Leu-440–Phe-455 and Ile-474–Phe-483. The span at Phe-441–Asn-453 shows a compositional bias: acidic residues. Positions Thr-508–Gly-528 are enriched in polar residues. 2 short sequence motifs (LFa) span residues Leu-529 to Phe-540 and Leu-564 to Phe-575. Residues Ser-531 and Ser-536 each carry the phosphoserine modification. Low complexity predominate over residues Leu-539–Ser-556. Polar residues predominate over residues Lys-582 to Gln-592. 2 positions are modified to phosphoserine: Ser-610 and Ser-611. Over residues Ala-627–Asp-638 the composition is skewed to basic and acidic residues. Short sequence motifs (LFa) lie at residues Leu-655 to Phe-667 and Leu-683 to Phe-695. Over residues Ser-690–Pro-699 the composition is skewed to polar residues. Phosphoserine occurs at positions 720, 744, 749, 780, and 795. Residues Phe-797–Ser-808 show a composition bias toward acidic residues. 2 consecutive short sequence motifs (LFa) follow at residues Val-832–Phe-840 and Asp-849–Phe-855. Disordered regions lie at residues Leu-863 to Ser-940 and Pro-991 to Val-1088. 2 positions are modified to phosphoserine: Ser-867 and Ser-870. Positions Leu-871 to Phe-881 match the LFa 10 motif. Residues Pro-894–Trp-919 are compositionally biased toward basic and acidic residues. An interaction with phospholipids region spans residues Gln-925 to Gln-1328. Over residues Asn-1016–Arg-1034 the composition is skewed to basic residues. A required for interaction with F-actin-capping protein subunit alpha (CAPZA1 or CAPZA2 or CAPZA3) region spans residues Lys-1017–Arg-1035. Phosphoserine occurs at positions 1042, 1060, 1077, and 1102. The tract at residues Ala-1115–His-1210 is disordered. 3 consecutive short sequence motifs (LFa) follow at residues Leu-1117–Phe-1124, Val-1157–Phe-1171, and Leu-1187–Phe-1195. Phosphoserine occurs at positions 1162 and 1165. A compositionally biased stretch (basic and acidic residues) spans Ala-1196–His-1210. 3 consecutive short sequence motifs (LFa) follow at residues Ile-1220 to Phe-1226, Leu-1249 to Phe-1257, and Met-1277 to Phe-1286. The disordered stretch occupies residues Gly-1289–Ser-1310. An LFa 17 motif is present at residues Ile-1317–Phe-1325. Ser-1327 is modified (phosphoserine).

Belongs to the FAM21 family. Component of the WASH core complex also described as WASH regulatory complex (SHRC) composed of WASHC1, WASHC2, WASHC3, WASHC4 and WASHC5; in the complex interacts (via N-terminus) directly with WASHC1. The WASH core complex associates with the F-actin-capping protein dimer (formed by CAPZA1, CAPZA2 or CAPZA3 and CAPZB) in a transient or substoichiometric manner which was initially described as WASH complex. Interacts with VPS35; mediates the association with the retromer CSC complex. Interacts with FKBP15. Interacts with CCDC93, CCDC22, VPS35L; indicative for an association of the WASH core complex with the CCC and retriever complexes. Directly interacts with TBC1D23.

It localises to the early endosome membrane. It is found in the cell membrane. In terms of biological role, acts as a component of the WASH core complex that functions as a nucleation-promoting factor (NPF) at the surface of endosomes, where it recruits and activates the Arp2/3 complex to induce actin polymerization, playing a key role in the fission of tubules that serve as transport intermediates during endosome sorting. Mediates the recruitment of the WASH core complex to endosome membranes via binding to phospholipids and VPS35 of the retromer CSC. Mediates the recruitment of the F-actin-capping protein dimer to the WASH core complex probably promoting localized F-actin polymerization needed for vesicle scission. Via its C-terminus binds various phospholipids, most strongly phosphatidylinositol 4-phosphate (PtdIns-(4)P), phosphatidylinositol 5-phosphate (PtdIns-(5)P) and phosphatidylinositol 3,5-bisphosphate (PtdIns-(3,5)P2). Involved in the endosome-to-plasma membrane trafficking and recycling of SNX27-retromer-dependent cargo proteins, such as GLUT1. Required for the association of DNAJC13, ENTR1, ANKRD50 with retromer CSC subunit VPS35. Required for the endosomal recruitment of CCC and retriever complexes subunits COMMD1 and CCDC93 as well as the retrievere complex subunit VPS35L. In Rattus norvegicus (Rat), this protein is WASH complex subunit 2.